A 192-amino-acid chain; its full sequence is Transposon Tn552 DNA-invertase BinR (192 aa).

One can recognise a Resolvase/invertase-type recombinase catalytic domain in the interval 1–136 (MKIGYARVST…AGRIAARARG (136 aa)). Catalysis depends on S9, which acts as the O-(5'-phospho-DNA)-serine intermediate. The segment at residues 163–182 (IKTIAEQWKVSRTTIYRYLN) is a DNA-binding region (H-T-H motif).

Belongs to the site-specific recombinase resolvase family.

Functionally, DNA-invertase, mediating the inversion of inv. The sequence is that of Transposon Tn552 DNA-invertase BinR (resR) from Staphylococcus aureus.